A 282-amino-acid polypeptide reads, in one-letter code: N-methyltransferase gliN (282 aa).

This sequence belongs to the methyltransferase superfamily. LaeA methyltransferase family.

It functions in the pathway mycotoxin biosynthesis. Its function is as follows. N-methyltransferase; part of the gene cluster that mediates the biosynthesis of gliotoxin, a member of the epipolythiodioxopiperazine (ETP) class of toxins characterized by a disulfide bridged cyclic dipeptide. The first step in gliotoxin biosynthesis is the condensation of serine and phenylalanine to form the cyclo-L-phenylalanyl-L-serine diketopiperazine (DKP) by the NRPS gliP. GliP is also able to produce the DKP cyclo-L-tryptophanyl-L-serine, suggesting that the substrate specificity of the first adenylation (A) domain in gliP is sufficiently relaxed to accommodate both L-Phe and L-Trp. The cytochrome P450 monooxygenase gliC has been shown to catalyze the subsequent hydroxylation of the alpha-carbon of L-Phe in cyclo-L-phenylalanyl-L-serine whereas the second cytochrome P450 enzyme, gliF, is presumably involved in the modification of the DKP side chain. The glutathione S-transferase (GST) gliG then forms a bis-glutathionylated biosynthetic intermediate which is responsible for the sulfurization of gliotoxin. This bis-glutathionylated intermediate is subsequently processed by the gamma-glutamyl cyclotransferase gliK to remove both gamma-glutamyl moieties. Subsequent processing via gliI yields a biosynthetic intermediate, which is N-methylated via the N-methyltransferase gliN, before the gliotoxin oxidoreductase gliT-mediated disulfide bridge closure. GliN-mediated amide methylation confers stability to ETP, damping the spontaneous formation of tri- and tetrasulfides. Intracellular dithiol gliotoxin oxidized by gliT is subsequently effluxed by gliA. Gliotoxin contributes to pathogenesis during invasive aspergillosis. In macrophages and neutrophils, gliotoxin showed inhibition of various different cell functions including cytokine production, antigen presentation, phagocytosis, and production of reactive oxygen species. The chain is N-methyltransferase gliN from Aspergillus fumigatus (strain ATCC MYA-4609 / CBS 101355 / FGSC A1100 / Af293) (Neosartorya fumigata).